A 932-amino-acid polypeptide reads, in one-letter code: Protocadherin gamma-A7 (932 aa).

The first 28 residues, 1–28, serve as a signal peptide directing secretion; that stretch reads MAAQPRGGDYRGFFLLSILLGTPWEAWA. 6 consecutive Cadherin domains span residues 29–133, 134–242, 243–347, 348–452, 453–562, and 570–682; these read GRIL…VPRF, LTEE…TPVF, SLPQ…APEV, TMTS…PPTF, PHSS…PPEI, and DGST…EPSD. Topologically, residues 29 to 692 are extracellular; the sequence is GRILYSVSEE…GPYNYDLTLY (664 aa). N-linked (GlcNAc...) asparagine glycosylation is found at asparagine 419 and asparagine 545. The helical transmembrane segment at 693–713 threads the bilayer; it reads LVVAVATVSCVFLAFVLVLLA. The Cytoplasmic segment spans residues 714-932; that stretch reads LRLRRWHKSR…KKKSGKKEKK (219 aa). Disordered regions lie at residues 805 to 841 and 902 to 932; these read PSIQQAPPNTDWRFSQAQRPGTSGSQNGDDTGTWPNN and ATLTNAAGKRDGKAPAGGNGNKKKSGKKEKK. Over residues 922-932 the composition is skewed to basic residues; the sequence is NKKKSGKKEKK.

It is found in the cell membrane. Its function is as follows. Potential calcium-dependent cell-adhesion protein. May be involved in the establishment and maintenance of specific neuronal connections in the brain. The sequence is that of Protocadherin gamma-A7 (PCDHGA7) from Homo sapiens (Human).